Here is a 432-residue protein sequence, read N- to C-terminus: Homogentisate 1,2-dioxygenase (432 aa).

The active-site Proton acceptor is the histidine 286. Fe cation-binding residues include histidine 329 and glutamate 335. Residues tyrosine 344 and histidine 365 each coordinate homogentisate. Histidine 365 contacts Fe cation.

Belongs to the homogentisate dioxygenase family. As to quaternary structure, hexamer; dimer of trimers. Requires Fe cation as cofactor.

The enzyme catalyses homogentisate + O2 = 4-maleylacetoacetate + H(+). It participates in amino-acid degradation; L-phenylalanine degradation; acetoacetate and fumarate from L-phenylalanine: step 4/6. In terms of biological role, involved in the catabolism of homogentisate (2,5-dihydroxyphenylacetate or 2,5-OH-PhAc), a central intermediate in the degradation of phenylalanine and tyrosine. Catalyzes the oxidative ring cleavage of the aromatic ring of homogentisate to yield maleylacetoacetate. The sequence is that of Homogentisate 1,2-dioxygenase from Bordetella petrii (strain ATCC BAA-461 / DSM 12804 / CCUG 43448).